We begin with the raw amino-acid sequence, 268 residues long: Agamous-like MADS-box protein AGL15 (268 aa).

One can recognise an MADS-box domain in the interval 1–61 (MGRGKIEIKR…GKLFEYSSTG (61 aa)). Positions 80 to 170 (AEEDCAEVDI…RRQVQELRSF (91 aa)) constitute a K-box domain. The tract at residues 205–268 (TDSDTTLQLG…PEAKRQRFSV (64 aa)) is disordered. Over residues 218 to 232 (EAHDRRTNEGERESP) the composition is skewed to basic and acidic residues. Polar residues predominate over residues 233–244 (SSDSVTTNTSSE).

In terms of assembly, homodimer. Interacts with SVP, AGL24, AP1, AGL6, AG, AGL1, AGL11, AGL5, AGL16, SOC1 and AGL21. Expressed at low levels in flowers and siliques. Also present in seedlings. Detected during embryogenesis and accumulates during early seed development (at protein level). Expressed in shoot apices and the base of leaf petioles.

Its subcellular location is the nucleus. It localises to the cytoplasm. Transcription factor involved in the negative regulation of flowering, probably through the photoperiodic pathway. Acts both as an activator and as a repressor of transcription. Binds DNA in a sequence-specific manner in large CArG motif 5'-CC (A/T)8 GG-3'. Participates probably in the regulation of programs active during the early stages of embryo development. Prevents premature perianth senescence and abscission, fruits development and seed desiccation. Stimulates the expression of at least DTA4, LEC2, FUS3, ABI3, AT4G38680/CSP2 and GRP2B/CSP4. Can enhance somatic embryo development in vitro. The sequence is that of Agamous-like MADS-box protein AGL15 (AGL15) from Arabidopsis thaliana (Mouse-ear cress).